A 258-amino-acid chain; its full sequence is Regulatory protein RecX (258 aa).

This sequence belongs to the RecX family.

The protein resides in the cytoplasm. Modulates RecA activity. This is Regulatory protein RecX from Streptococcus pyogenes serotype M2 (strain MGAS10270).